The chain runs to 933 residues: Valine--tRNA ligase (933 aa).

The 'HIGH' region motif lies at 58–68 (PNVTGSLHMGH). The short motif at 556 to 560 (KMSKS) is the 'KMSKS' region element. An ATP-binding site is contributed by Lys-559. 2 coiled-coil regions span residues 807-833 (VTKN…ANKV) and 864-933 (EGLV…LGLK).

The protein belongs to the class-I aminoacyl-tRNA synthetase family. ValS type 1 subfamily. Monomer.

It is found in the cytoplasm. The enzyme catalyses tRNA(Val) + L-valine + ATP = L-valyl-tRNA(Val) + AMP + diphosphate. Catalyzes the attachment of valine to tRNA(Val). As ValRS can inadvertently accommodate and process structurally similar amino acids such as threonine, to avoid such errors, it has a 'posttransfer' editing activity that hydrolyzes mischarged Thr-tRNA(Val) in a tRNA-dependent manner. This Prochlorococcus marinus (strain SARG / CCMP1375 / SS120) protein is Valine--tRNA ligase.